The following is a 502-amino-acid chain: Hexokinase-2 (502 aa).

Residues Val4 to Val24 form a helical membrane-spanning segment. A Hexokinase domain is found at Ala35–Ala487. The segment at Ser90–Val228 is hexokinase small subdomain. Positions 104, 105, and 106 each coordinate ADP. 4 residues coordinate D-glucose: Thr194, Lys195, Asn229, and Asp230. The segment at Asn229–Asp476 is hexokinase large subdomain. Thr253 provides a ligand contact to ADP. D-glucose is bound by residues Asn256, Glu284, and Glu315. Residue Gly441 participates in ADP binding.

The protein belongs to the hexokinase family. Highly expressed in siliques, at intermediate levels in roots and flowers, and at lower levels in stems, rosette and cauline leaves.

Its subcellular location is the mitochondrion outer membrane. The enzyme catalyses a D-hexose + ATP = a D-hexose 6-phosphate + ADP + H(+). It catalyses the reaction D-fructose + ATP = D-fructose 6-phosphate + ADP + H(+). The catalysed reaction is D-glucose + ATP = D-glucose 6-phosphate + ADP + H(+). Its pathway is carbohydrate metabolism; hexose metabolism. It participates in carbohydrate degradation; glycolysis; D-glyceraldehyde 3-phosphate and glycerone phosphate from D-glucose: step 1/4. Fructose and glucose phosphorylating enzyme. May be involved in the phosphorylation of glucose during the export from mitochondrion to cytosol. Acts as a sugar sensor which may regulate sugar-dependent gene repression or activation. Mediates the effects of sugar on plant growth and development independently of its catalytic activity or the sugar metabolism. May regulate the execution of program cell death in plant cells. In Arabidopsis thaliana (Mouse-ear cress), this protein is Hexokinase-2 (HXK2).